Reading from the N-terminus, the 314-residue chain is Vacuolar membrane protein SCRG_03194 (314 aa).

Residues 32–60 (KPTSSVVSETSSKSLPSLTSSAFSTSSGA) are disordered. Residues 93 to 113 (VYIAVGAVIGAIFISILIWWL) form a helical membrane-spanning segment. 3 positions are modified to phosphoserine: serine 148, serine 254, and serine 274. The interval 240 to 309 (EERKLNLNRP…PSMFLDDVLN (70 aa)) is disordered. The span at 254–269 (SPERKEKKINSMEGYH) shows a compositional bias: basic and acidic residues.

The protein belongs to the PRM5 family.

The protein localises to the vacuole membrane. This chain is Vacuolar membrane protein SCRG_03194, found in Saccharomyces cerevisiae (strain RM11-1a) (Baker's yeast).